A 404-amino-acid chain; its full sequence is MTYIRKGTPVFRKITFAFFAAGFNTFAILYCVQPLMEEFTREFHVTPTAASLSLSVTTMLLAVSMLVFGSLSEVWGRKPIMGISMLAASVLCLASAFSPSFHTLLVLRTIQGVALAGLPSIAMAYLGEEIEPGSLGSAMGLYISGNAIGAVFGRIVSGLLSEYLNWHMAMGTIGVISLIASVIFFINLPPSRHFTPRKLKLGKLGMSLIGHLRDRKLFSLFLIGFLLLGSNVALFNYIVYVLLGPPYSLNKAFSSWIFIVMIVGIFSSSFIGRMVDRYGYPKILVMNIFIVIAGALFTINNMLAVKILGIALFTFGFFGGHSVASSWVGRRALHNKAQASSLYLFFYYAGSSVFGTIGGLFWSGFHWLGVVGMITFMLLVALWLSGYLARSVKMPDKRNEKGLN.

12 helical membrane-spanning segments follow: residues 16-36 (FAFF…QPLM), 49-69 (AASL…LVFG), 79-99 (PIMG…AFSP), 110-130 (IQGV…GEEI), 133-153 (GSLG…AVFG), 166-186 (WHMA…IFFI), 221-241 (FLIG…IVYV), 252-272 (AFSS…SFIG), 283-303 (ILVM…NNML), 307-327 (ILGI…ASSW), 342-362 (LYLF…GLFW), and 364-384 (GFHW…ALWL).

Belongs to the major facilitator superfamily.

The protein resides in the cell membrane. This is an uncharacterized protein from Bacillus subtilis (strain 168).